The chain runs to 906 residues: Ribonucleoside-diphosphate reductase large subunit-like protein (906 aa).

Disordered regions lie at residues 1–70 (MNPA…AGNT) and 89–129 (VSWR…LSTF). Positions 98 to 109 (PDGTPSVLSLTR) are enriched in polar residues.

Belongs to the ribonucleoside diphosphate reductase large chain family.

The protein resides in the virion. It localises to the host cytoplasm. Functionally, does not possess a ribonucleotide reductase activity. Betaherpesviruses probably use another strategy to expand the dNTP pool in a quiescent host cell. The chain is Ribonucleoside-diphosphate reductase large subunit-like protein from Human cytomegalovirus (strain AD169) (HHV-5).